Here is a 149-residue protein sequence, read N- to C-terminus: Protein Rv2250A (149 aa).

This Mycobacterium tuberculosis (strain ATCC 25618 / H37Rv) protein is Protein Rv2250A.